Reading from the N-terminus, the 479-residue chain is MSIVVKNNIHWVGQRDWEVRDFHGTEYKTLRGSSYNSYLIREEKNVLIDTVDHKFSREFVQNLRNEIDLADIDYIVINHAEEDHAGALTELMAQIPDTPIYCTANAIDSINGHHHHPEWNFNVVKTGDTLDIGNGKQLIFVETPMLHWPDSMMTYLTGDAVLFSNDAFGQHYCDEHLFNDEVDQTELFEQCQRYYANILTPFSRLVTPKITEILGFNLPVDMIATSHGVVWRDNPTQIVELYLKWAADYQEDRITIFYDTMSNNTRMMADAIAQGIAETDPRVAVKIFNVARSDKNEILTNVFRSKGVLVGTSTMNNVMMPKIAGLVEEMTGLRFRNKRASAFGSHGWSGGAVDRLSTRLQDAGFEMSLSLKAKWRPDQDALELCREHGREIARQWALAPLPQSTVNTVVKEETSAATTADLGPRMQCSVCQWIYDPAKGEPMQDVAPGTPWSEVPDNFLCPECSLGKDVFDELASEAK.

The interval 30–210 is zinc metallo-hydrolase; sequence LRGSSYNSYL…PFSRLVTPKI (181 aa). Residues His79, Glu81, Asp83, His147, Asp166, and His227 each contribute to the Fe cation site. The Flavodoxin-like domain occupies 254-393; that stretch reads ITIFYDTMSN…LCREHGREIA (140 aa). FMN is bound by residues 260–264 and 342–369; these read TMSNN and AFGSHGWSGGAVDRLSTRLQDAGFEMSL. The Rubredoxin-like domain occupies 423 to 474; it reads GPRMQCSVCQWIYDPAKGEPMQDVAPGTPWSEVPDNFLCPECSLGKDVFDEL. Fe cation-binding residues include Cys428, Cys431, Cys461, and Cys464.

This sequence in the N-terminal section; belongs to the zinc metallo-hydrolase group 3 family. In terms of assembly, homotetramer. Requires Fe cation as cofactor. The cofactor is FMN.

The protein localises to the cytoplasm. It participates in nitrogen metabolism; nitric oxide reduction. Functionally, anaerobic nitric oxide reductase; uses NADH to detoxify nitric oxide (NO), protecting several 4Fe-4S NO-sensitive enzymes. Has at least 2 reductase partners, only one of which (NorW, flavorubredoxin reductase) has been identified. NO probably binds to the di-iron center; electrons enter from the NorW at rubredoxin and are transferred sequentially to the FMN center and the di-iron center. Also able to function as an aerobic oxygen reductase. This is Anaerobic nitric oxide reductase flavorubredoxin from Escherichia coli O6:H1 (strain CFT073 / ATCC 700928 / UPEC).